The chain runs to 108 residues: Heme-degrading monooxygenase HmoA (108 aa).

The region spanning 2–95 (FVQLRKMTVK…DYLISTEVSM (94 aa)) is the ABM domain. Residue His-76 coordinates heme.

It belongs to the antibiotic biosynthesis monooxygenase family. As to quaternary structure, homodimer.

It is found in the cytoplasm. It carries out the reaction heme b + 3 reduced [NADPH--hemoprotein reductase] + 3 O2 = biliverdin IXalpha + CO + Fe(2+) + 3 oxidized [NADPH--hemoprotein reductase] + 3 H2O + H(+). Allows bacterial pathogens to use the host heme as an iron source. Catalyzes the oxidative degradation of the heme macrocyclic porphyrin ring in the presence of a suitable electron donor such as ascorbate or NADPH--cytochrome P450 reductase, with subsequent release of free iron. In Bacillus subtilis (strain 168), this protein is Heme-degrading monooxygenase HmoA (hmoA).